The chain runs to 449 residues: Trigger factor (449 aa).

A PPIase FKBP-type domain is found at 174–261 (GDIAVVGFKG…LKDLKTRELP (88 aa)). Residues 430–449 (ENSTVTEKAPDKDKPSVTDA) are disordered. Positions 437–449 (KAPDKDKPSVTDA) are enriched in basic and acidic residues.

This sequence belongs to the FKBP-type PPIase family. Tig subfamily.

The protein resides in the cytoplasm. It carries out the reaction [protein]-peptidylproline (omega=180) = [protein]-peptidylproline (omega=0). Its function is as follows. Involved in protein export. Acts as a chaperone by maintaining the newly synthesized protein in an open conformation. Functions as a peptidyl-prolyl cis-trans isomerase. The sequence is that of Trigger factor from Synechococcus sp. (strain CC9311).